A 543-amino-acid chain; its full sequence is Zinc finger protein egl-43 (543 aa).

The segment at 2-62 (SIDTDFLTSV…NLIKEADDGE (61 aa)) is positive regulatory (PR) domain. C2H2-type zinc fingers lie at residues 159 to 181 (HKCG…SHIH) and 187 to 209 (FRCH…RRVH). The C2H2-type 3; atypical zinc-finger motif lies at 213–233 (WTCPTCQSQMPSQAALTKHRP). Residues 299–380 (PDAECSSGHA…TSTKKRPTSH (82 aa)) are disordered. The segment covering 306–317 (GHASESSPTTTE) has biased composition (polar residues). Residues 335–348 (TTSKSDDGEDRDSI) show a composition bias toward basic and acidic residues. 2 consecutive C2H2-type zinc fingers follow at residues 444-466 (YTCK…LRTH) and 472-495 (YKCQ…RNIH). Positions 496-543 (NKPNTSLTPHNHHRQRSLHNSTSTSTTTTTVHHPLLHLPGTSVPVPKV) are disordered. The span at 513–533 (LHNSTSTSTTTTTVHHPLLHL) shows a compositional bias: low complexity.

It is found in the nucleus. Probable transcription factor, required for migration of the hermaphrodite-specific motor neurons (HSNs) from the tail to the gonad primordium during HSN cell differentiation. Required for phasmid neuron development. Required to specify the pi-cell fate of ventral uterine precursor cell (VU) cells. Functionally, probable transcription factor, involved in lin-12 (Notch)-dependent anchor cell (AC) and ventral uterine (VU) precursor cell fate specification and in AC invasion. Prevents AC proliferation after AC cell specification by repressing lin-12 expression. May form a positive feedback loop, together with the transcription factor fos-1, that maintains mutual high levels of expression and so activates AC invasion. In terms of biological role, dispensable for anchor cell (AC) invasion and for preventing AC proliferation. In Caenorhabditis elegans, this protein is Zinc finger protein egl-43.